Here is a 329-residue protein sequence, read N- to C-terminus: Phospho-N-acetylmuramoyl-pentapeptide-transferase (329 aa).

9 helical membrane-spanning segments follow: residues 1 to 21, 53 to 73, 76 to 96, 109 to 129, 141 to 161, 175 to 195, 198 to 218, 237 to 257, and 309 to 329; these read MLLNGIVAAVITMIITIIGIP, MGGFVFVVVSLVVSLVAALVF, FSPAFITAWWVFAMYAVIGFL, GLTAKQKMLAQILIGIVSYFI, ILSWQVNIGIFFSIFIIIWLV, GLASITVAISLTAYAVIAVVH, YDVLLIILSVIGGLLGFFVFN, FLAIVSILLHAEWTLLLIGAV, and IVFWLFTAVLSVIALCIYFAF.

Belongs to the glycosyltransferase 4 family. MraY subfamily. Requires Mg(2+) as cofactor.

The protein localises to the cell membrane. It carries out the reaction UDP-N-acetyl-alpha-D-muramoyl-L-alanyl-gamma-D-glutamyl-L-lysyl-D-alanyl-D-alanine + di-trans,octa-cis-undecaprenyl phosphate = Mur2Ac(oyl-L-Ala-gamma-D-Glu-L-Lys-D-Ala-D-Ala)-di-trans,octa-cis-undecaprenyl diphosphate + UMP. It functions in the pathway cell wall biogenesis; peptidoglycan biosynthesis. In terms of biological role, catalyzes the initial step of the lipid cycle reactions in the biosynthesis of the cell wall peptidoglycan: transfers peptidoglycan precursor phospho-MurNAc-pentapeptide from UDP-MurNAc-pentapeptide onto the lipid carrier undecaprenyl phosphate, yielding undecaprenyl-pyrophosphoryl-MurNAc-pentapeptide, known as lipid I. This is Phospho-N-acetylmuramoyl-pentapeptide-transferase from Lactococcus lactis subsp. cremoris (strain SK11).